The sequence spans 1394 residues: ABC transporter patM (1394 aa).

Residues 1–41 (MVDNYHSSLDVAKTPIQSDADAQKSEAETEGPSSKSSQIAA) are disordered. An ABC transporter 1 domain is found at 98–341 (SPLQNRQRKQ…FEDLGFECLS (244 aa)). 6 helical membrane-spanning segments follow: residues 437 to 457 (SLWAVELATIVVQSLVLGTLF), 467 to 487 (LFIFASALFYSVLVPALQSMA), 511 to 531 (IAYALGLVTTDVVWKVAAICY), 546 to 566 (GNFFTWFLIIYLEHLALSMFF), 579 to 599 (AVLPVGIFFNMYVLYTGLYVP), and 688 to 708 (VGINAALFVFFALCSGIGMEM). Residues 727 to 755 (VTHRRDKIDSETGQDQGNESSEMSAGQSN) are disordered. Positions 737-755 (ETGQDQGNESSEMSAGQSN) are enriched in polar residues. One can recognise an ABC transporter 2 domain in the interval 767–1013 (DKSHNLAWTN…EAIQYFQPRS (247 aa)). Position 808–815 (808–815 (GVSGAGKT)) interacts with ATP. A run of 6 helical transmembrane segments spans residues 1131–1151 (GAYNRVFSAFMSLIVGPPLGL), 1177–1197 (LAFVLSAFIVELPFTFLSSLV), 1219–1239 (FLMYELFGVFATSLAQLCASL), 1245–1265 (AAFAANGFFFMFCNTFAGTLS), 1280–1300 (ISPLFYLGEGVTVDVLQDLPI), and 1368–1388 (IGVFICFIAFNFTMVLVMTYL).

The protein belongs to the ABC transporter superfamily. ABCG family. PDR (TC 3.A.1.205) subfamily.

It is found in the vacuole membrane. It localises to the cell membrane. It participates in mycotoxin biosynthesis; patulin biosynthesis. Its function is as follows. ABC transporter; part of the gene cluster that mediates the biosynthesis of patulin, an acetate-derived tetraketide mycotoxin produced by several fungal species that shows antimicrobial properties against several bacteria. May be involved in the secretion of E-ascladiol to be converted to patulin by the secreted patulin synthase patE. This is ABC transporter patM from Penicillium expansum (Blue mold rot fungus).